The primary structure comprises 586 residues: Aspartate--tRNA(Asp/Asn) ligase (586 aa).

Glutamate 175 is an L-aspartate binding site. The segment at 199-202 (QIFK) is aspartate. Arginine 221 lines the L-aspartate pocket. Residues 221 to 223 (RDE) and glutamine 230 each bind ATP. Histidine 448 is a binding site for L-aspartate. Position 482 (glutamate 482) interacts with ATP. Arginine 489 serves as a coordination point for L-aspartate. 534–537 (GVDR) is an ATP binding site.

The protein belongs to the class-II aminoacyl-tRNA synthetase family. Type 1 subfamily. Homodimer.

Its subcellular location is the cytoplasm. It carries out the reaction tRNA(Asx) + L-aspartate + ATP = L-aspartyl-tRNA(Asx) + AMP + diphosphate. Aspartyl-tRNA synthetase with relaxed tRNA specificity since it is able to aspartylate not only its cognate tRNA(Asp) but also tRNA(Asn). Reaction proceeds in two steps: L-aspartate is first activated by ATP to form Asp-AMP and then transferred to the acceptor end of tRNA(Asp/Asn). The chain is Aspartate--tRNA(Asp/Asn) ligase from Syntrophomonas wolfei subsp. wolfei (strain DSM 2245B / Goettingen).